The primary structure comprises 218 residues: Small ribosomal subunit protein uS3 (218 aa).

Residues 39-107 (IRDYIKSKLL…QISINIVEIK (69 aa)) enclose the KH type-2 domain.

Belongs to the universal ribosomal protein uS3 family. In terms of assembly, part of the 30S ribosomal subunit. Forms a tight complex with proteins S10 and S14.

Its function is as follows. Binds the lower part of the 30S subunit head. Binds mRNA in the 70S ribosome, positioning it for translation. The chain is Small ribosomal subunit protein uS3 from Desulforudis audaxviator (strain MP104C).